The following is a 284-amino-acid chain: MLTLLAPAKVNLSLEVLYRRNDGYHELRSIIQSLSLCDRLSFSPAKTVQISSDSPDWQAEHSLVSKAVALFSEKCGQGRGVNLTIAKRIPLVSGLGGDSSCAAAVLKGLNKLWGCGYPRWRLMELGAELGSDVPFFMMGGTAMMEGRGETVTPLPTLNQMWAVLLVPEIEMPPDKTAALYRNLHADSFSSGEISDKLLEDICQGKLSYSSCFNVFEKIAFTLFPDLAKYRWQFLEAGAYQIFLAGAGPTLFTLLKDKNMAEKIYHNLCQKGHQAYLVSTLGPLD.

Lysine 9 is an active-site residue. 90 to 100 lines the ATP pocket; the sequence is PLVSGLGGDSS. The active site involves aspartate 132.

It belongs to the GHMP kinase family. IspE subfamily.

It carries out the reaction 4-CDP-2-C-methyl-D-erythritol + ATP = 4-CDP-2-C-methyl-D-erythritol 2-phosphate + ADP + H(+). It participates in isoprenoid biosynthesis; isopentenyl diphosphate biosynthesis via DXP pathway; isopentenyl diphosphate from 1-deoxy-D-xylulose 5-phosphate: step 3/6. In terms of biological role, catalyzes the phosphorylation of the position 2 hydroxy group of 4-diphosphocytidyl-2C-methyl-D-erythritol. The protein is 4-diphosphocytidyl-2-C-methyl-D-erythritol kinase of Dehalococcoides mccartyi (strain ATCC BAA-2266 / KCTC 15142 / 195) (Dehalococcoides ethenogenes (strain 195)).